The primary structure comprises 234 residues: Transcriptional activator protein TraR (234 aa).

The region spanning 167-232 (TAEDAAWLDP…HLTALAIRRK (66 aa)) is the HTH luxR-type domain. The H-T-H motif DNA-binding region spans 191–210 (MEEIADVEGVKYNSVRVKLR).

The protein belongs to the autoinducer-regulated transcriptional regulatory protein family.

Positive regulation of conjugal transfer of Ti plasmids. TraR activates target genes in the presence of AAI and also activates traR and traI themselves. This chain is Transcriptional activator protein TraR (traR), found in Rhizobium radiobacter (Agrobacterium tumefaciens).